The chain runs to 1681 residues: Y' element ATP-dependent helicase protein 1 copy 2 (1681 aa).

In terms of domain architecture, Helicase ATP-binding spans 683–860 (EIYMADTPSV…LQRIGLTGLA (178 aa)). 696 to 703 (APPGYGKT) lines the ATP pocket. The Helicase C-terminal domain maps to 917 to 1066 (KLLLALFEIE…EFYGLESKKG (150 aa)). The span at 1140–1283 (ANASTNATTN…ATTTESTNAS (144 aa)) shows a compositional bias: low complexity. Positions 1140–1307 (ANASTNATTN…RFHPVTDINK (168 aa)) are disordered. Over residues 1284–1307 (AKEDANKDGNAEDNRFHPVTDINK) the composition is skewed to basic and acidic residues.

It belongs to the helicase family. Yeast subtelomeric Y' repeat subfamily.

Functionally, catalyzes DNA unwinding and is involved in telomerase-independent telomere maintenance. The protein is Y' element ATP-dependent helicase protein 1 copy 2 (YRF1-2) of Saccharomyces cerevisiae (strain ATCC 204508 / S288c) (Baker's yeast).